The sequence spans 207 residues: Macrophage immunometabolism regulator (207 aa).

Met-1 bears the N-acetylmethionine mark. A disordered region spans residues 1-41 (MEVDVNGESRSALTTLPLPVAEASSPGKAEAEKPRCSSTPC). A phosphoserine mark is found at Ser-25, Ser-140, and Ser-167.

This sequence belongs to the UNC119-binding protein family. Interacts with UNC119 and UNC119B; interaction preferentially takes place when UNC119 and UNC119B are unliganded with myristoylated proteins.

It is found in the cytoplasm. It localises to the cell projection. Its subcellular location is the cilium. Regulates the macrophage function, by enhancing the resolution of inflammation and wound repair functions mediated by M2 macrophages. The regulation of macrophage function is, due at least in part, to its ability to inhibit glycolysis. May play also a role in trafficking of proteins via its interaction with UNC119 and UNC119B cargo adapters: may help the release of UNC119 and UNC119B cargo or the recycling of UNC119 and UNC119B. May play a role in ciliary membrane localization via its interaction with UNC119B and protein transport into photoreceptor cells. The polypeptide is Macrophage immunometabolism regulator (MACIR) (Bos taurus (Bovine)).